Consider the following 100-residue polypeptide: UPF0125 protein HD_1828 (100 aa).

This sequence belongs to the UPF0125 (RnfH) family.

The protein is UPF0125 protein HD_1828 of Haemophilus ducreyi (strain 35000HP / ATCC 700724).